Consider the following 666-residue polypeptide: Putative L-type lectin-domain containing receptor kinase V.1 (666 aa).

The first 18 residues, 1–18, serve as a signal peptide directing secretion; that stretch reads MVLLLFLVLFFVPESVVC. Residues 19–289 are Extracellular-facing; it reads QRPNPNGVEF…WIQSPNGILT (271 aa). Positions 27–257 are legume-lectin like; it reads EFNTSGNMYT…SHYILGWTFK (231 aa). 6 N-linked (GlcNAc...) asparagine glycosylation sites follow: asparagine 29, asparagine 74, asparagine 123, asparagine 176, asparagine 204, and asparagine 259. Residues 290 to 310 form a helical membrane-spanning segment; it reads ISLTVSGVIILIILSLSLWLF. At 311–666 the chain is on the cytoplasmic side; it reads LKRKKLLEVL…FTESFVSHGR (356 aa). Positions 344-625 constitute a Protein kinase domain; it reads FKDTEVLGKG…SVAQLPHNLL (282 aa). ATP-binding positions include 350–358 and lysine 373; that span reads LGKGGFGKV. The Proton acceptor role is filled by aspartate 469.

The protein in the C-terminal section; belongs to the protein kinase superfamily. Ser/Thr protein kinase family. In the N-terminal section; belongs to the leguminous lectin family.

The protein resides in the cell membrane. The enzyme catalyses L-seryl-[protein] + ATP = O-phospho-L-seryl-[protein] + ADP + H(+). It carries out the reaction L-threonyl-[protein] + ATP = O-phospho-L-threonyl-[protein] + ADP + H(+). The polypeptide is Putative L-type lectin-domain containing receptor kinase V.1 (LECRK51) (Arabidopsis thaliana (Mouse-ear cress)).